A 158-amino-acid polypeptide reads, in one-letter code: Placenta growth factor (158 aa).

The segment at residues M1–G23 is a signal peptide (or 26). Residues N29 and N30 are each glycosylated (N-linked (GlcNAc...) asparagine). 3 disulfide bridges follow: C48-C90, C79-C125, and C83-C127. An N-linked (GlcNAc...) asparagine glycan is attached at N97. A disordered region spans residues A136 to L158. The span at E137–S148 shows a compositional bias: basic residues.

It belongs to the PDGF/VEGF growth factor family. Antiparallel homodimer; disulfide-linked. Also found as heterodimer with VEGFA/VEGF.

It is found in the secreted. Growth factor active in angiogenesis and endothelial cell growth, stimulating their proliferation and migration. It binds to the receptor FLT1/VEGFR-1. Also promotes cell tumor growth. This chain is Placenta growth factor (Pgf), found in Rattus norvegicus (Rat).